The following is a 2381-amino-acid chain: Nipped-B-like protein A (2381 aa).

An HEAT 1 repeat occupies 85–124; it reads SDELEGDVPVLLQLLMSRNPNIFRNKTAPNTPQYPAQAGI. Disordered stretches follow at residues 131–211, 240–289, and 329–503; these read PPYK…HLQQ, HLLQ…DIVG, and LAAI…ELPP. The span at 138–158 shows a compositional bias: polar residues; it reads GSMQGSPASANYQQASMSHSP. Composition is skewed to basic and acidic residues over residues 254–273 and 333–355; these read GTKDLHLGSQDKQRGQKSSE and ERMESEAAMETERSAKEVQDKDK. The span at 373–389 shows a compositional bias: gly residues; that stretch reads GTAGSGSGAPGGGGGAN. The segment covering 451–473 has biased composition (basic and acidic residues); the sequence is VKHEHDHDPEHPHYDDKQPDTPR. Residues 552-565 carry the PxVxL motif motif; the sequence is KKSVKPVVVLQKLS. The segment covering 570–580 has biased composition (basic and acidic residues); sequence QRLMRERDSRA. 2 disordered regions span residues 570-604 and 629-708; these read QRLMRERDSRASKSGKNRLSSGRSGKGGIDPSVLK and RKRS…NEVA. Residues 581–592 are compositionally biased toward polar residues; sequence SKSGKNRLSSGR. Composition is skewed to basic and acidic residues over residues 633–642 and 658–694; these read TVNERPKYAE and KDRDRTWEAEERDRRSSGEHRRGNFDARRGSGSRYDD. HEAT repeat units follow at residues 1299–1337, 1375–1413, 1477–1516, and 1843–1881; these read SQSFDIYLTQILRVLGESAIAVRTKAMKCLSEVVAVDPS, PQLTEQYYDMLIERILDTGISVRKRVIKILRDICLEQPN, YDWFEQLLQNLLKSEEDSSYKPTRKACVQLVDNLVEHILK, and LIHPVQCVPYLIAMGTDAEPTMRNKADQQLVEIDKKYTG. Disordered regions lie at residues 2005-2095 and 2228-2271; these read IPGR…DLDD and LLGG…GDSA. Residues 2006-2021 are compositionally biased toward basic residues; that stretch reads PGRKSRKRRRRRRRPQ. Residues 2040–2056 show a composition bias toward basic and acidic residues; the sequence is EEERGAQDEERERHSGD. Residues 2057 to 2068 are compositionally biased toward acidic residues; sequence EEYDDDDYEEDE. Positions 2077 to 2086 are enriched in basic and acidic residues; the sequence is KPTEDIRQSE.

Belongs to the SCC2/Nipped-B family.

The protein localises to the nucleus. Its function is as follows. May play a structural role in chromatin. Involved in sister chromatid cohesion, possibly by facilitating the cohesin complex loading. Transcription factor, which may promote cortical neuron migration during brain development by regulating the transcription of crucial genes in this process. This Danio rerio (Zebrafish) protein is Nipped-B-like protein A (nipbla).